The chain runs to 131 residues: Small ribosomal subunit protein uS8 (131 aa).

The protein belongs to the universal ribosomal protein uS8 family. Part of the 30S ribosomal subunit. Contacts proteins S5 and S12.

In terms of biological role, one of the primary rRNA binding proteins, it binds directly to 16S rRNA central domain where it helps coordinate assembly of the platform of the 30S subunit. The protein is Small ribosomal subunit protein uS8 of Desulforudis audaxviator (strain MP104C).